The primary structure comprises 607 residues: Glutamine--fructose-6-phosphate aminotransferase [isomerizing] (607 aa).

Cys-2 functions as the Nucleophile; for GATase activity in the catalytic mechanism. Residues 2 to 217 (CGIVGIVGHS…DGDWAVVRRD (216 aa)) enclose the Glutamine amidotransferase type-2 domain. 2 consecutive SIS domains span residues 283-422 (LPFD…ARGV) and 455-597 (IARE…VDQP). Lys-602 functions as the For Fru-6P isomerization activity in the catalytic mechanism.

As to quaternary structure, homodimer.

Its subcellular location is the cytoplasm. The catalysed reaction is D-fructose 6-phosphate + L-glutamine = D-glucosamine 6-phosphate + L-glutamate. Its function is as follows. Catalyzes the first step in hexosamine metabolism, converting fructose-6P into glucosamine-6P using glutamine as a nitrogen source. In Mesorhizobium japonicum (strain LMG 29417 / CECT 9101 / MAFF 303099) (Mesorhizobium loti (strain MAFF 303099)), this protein is Glutamine--fructose-6-phosphate aminotransferase [isomerizing].